The primary structure comprises 175 residues: Ribosome maturation factor RimM (175 aa).

The PRC barrel domain maps to E96–F175.

The protein belongs to the RimM family. Binds ribosomal protein uS19.

The protein resides in the cytoplasm. In terms of biological role, an accessory protein needed during the final step in the assembly of 30S ribosomal subunit, possibly for assembly of the head region. Essential for efficient processing of 16S rRNA. May be needed both before and after RbfA during the maturation of 16S rRNA. It has affinity for free ribosomal 30S subunits but not for 70S ribosomes. In Actinobacillus pleuropneumoniae serotype 5b (strain L20), this protein is Ribosome maturation factor RimM.